Here is a 360-residue protein sequence, read N- to C-terminus: Phosphoserine aminotransferase (360 aa).

Arginine 42 contacts L-glutamate. Pyridoxal 5'-phosphate-binding positions include 76–77, tryptophan 102, threonine 153, aspartate 172, and glutamine 195; that span reads AR. At lysine 196 the chain carries N6-(pyridoxal phosphate)lysine. 237–238 contributes to the pyridoxal 5'-phosphate binding site; the sequence is NT.

It belongs to the class-V pyridoxal-phosphate-dependent aminotransferase family. SerC subfamily. Homodimer. The cofactor is pyridoxal 5'-phosphate.

It localises to the cytoplasm. The catalysed reaction is O-phospho-L-serine + 2-oxoglutarate = 3-phosphooxypyruvate + L-glutamate. It carries out the reaction 4-(phosphooxy)-L-threonine + 2-oxoglutarate = (R)-3-hydroxy-2-oxo-4-phosphooxybutanoate + L-glutamate. Its pathway is amino-acid biosynthesis; L-serine biosynthesis; L-serine from 3-phospho-D-glycerate: step 2/3. The protein operates within cofactor biosynthesis; pyridoxine 5'-phosphate biosynthesis; pyridoxine 5'-phosphate from D-erythrose 4-phosphate: step 3/5. In terms of biological role, catalyzes the reversible conversion of 3-phosphohydroxypyruvate to phosphoserine and of 3-hydroxy-2-oxo-4-phosphonooxybutanoate to phosphohydroxythreonine. This is Phosphoserine aminotransferase from Photobacterium profundum (strain SS9).